A 316-amino-acid chain; its full sequence is Olfactory receptor 1N2 (316 aa).

At methionine 1–proline 28 the chain is on the extracellular side. N-linked (GlcNAc...) asparagine glycosylation occurs at asparagine 8. Residues leucine 29–isoleucine 49 form a helical membrane-spanning segment. Topologically, residues leucine 50–threonine 60 are cytoplasmic. Residues proline 61–isoleucine 81 form a helical membrane-spanning segment. Residues proline 82–cysteine 100 are Extracellular-facing. An intrachain disulfide couples cysteine 100 to cysteine 182. Residues leucine 101–methionine 121 form a helical membrane-spanning segment. At alanine 122–alanine 145 the chain is on the cytoplasmic side. Residues leucine 146 to leucine 166 form a helical membrane-spanning segment. Residues threonine 167–glutamate 199 are Extracellular-facing. The helical transmembrane segment at leucine 200 to serine 220 threads the bilayer. Residues tyrosine 221–threonine 243 lie on the Cytoplasmic side of the membrane. The helical transmembrane segment at cysteine 244 to leucine 264 threads the bilayer. Residues proline 265–glutamate 274 are Extracellular-facing. The chain crosses the membrane as a helical span at residues serine 275–leucine 295. Over arginine 296–leucine 316 the chain is Cytoplasmic.

Belongs to the G-protein coupled receptor 1 family.

Its subcellular location is the membrane. Its function is as follows. Odorant receptor. In Homo sapiens (Human), this protein is Olfactory receptor 1N2 (OR1N2).